A 287-amino-acid polypeptide reads, in one-letter code: Hypersensitive-induced response protein-like protein 2 (287 aa).

Glycine 2 carries N-myristoyl glycine lipidation.

Functionally, positive regulator of hypersensitive response (HR)-like cell death. May be involved in potassium ion channel regulation. The polypeptide is Hypersensitive-induced response protein-like protein 2 (HIRL2) (Oryza sativa subsp. japonica (Rice)).